Consider the following 369-residue polypeptide: Septin-5 (369 aa).

Threonine 13 carries the phosphothreonine modification. One can recognise a Septin-type G domain in the interval 41–314; sequence KGFDFTLMVA…ENYRAHCIQQ (274 aa). Positions 51-58 are G1 motif; sequence GESGLGKS. GTP is bound by residues 51-58, threonine 85, and glycine 111; that span reads GESGLGKS. Residues 108-111 are G3 motif; the sequence is DTPG. Arginine 168 is subject to Omega-N-methylarginine. A G4 motif region spans residues 189–192; the sequence is AKAD. 190-198 serves as a coordination point for GTP; the sequence is KADCLVPSE. Serine 225 is subject to Phosphoserine. Glycine 248 and arginine 263 together coordinate GTP. A Phosphoserine modification is found at serine 327. Position 336 is a phosphothreonine (threonine 336). The stretch at 338-369 forms a coiled coil; sequence DSETEKLIRMKDEELRRMQEMLQKMKQRMQDQ.

This sequence belongs to the TRAFAC class TrmE-Era-EngA-EngB-Septin-like GTPase superfamily. Septin GTPase family. Septins polymerize into heterooligomeric protein complexes that form filaments, and can associate with cellular membranes, actin filaments and microtubules. GTPase activity is required for filament formation. Interacts with SEPTIN2 and SEPTIN5. In platelets, associated with a complex containing STX4. Interacts with PRKN; this interaction leads to SEPTIN5 ubiquitination and degradation. Interacts with DYRK1A. Interacts with STX1A; in the cerebellar cortex. Post-translationally, phosphorylated by DYRK1A. In terms of tissue distribution, expressed in brain and testis and at lower level in heart, spleen, lung and kidney.

The protein resides in the cytoplasm. Its subcellular location is the cytoskeleton. Filament-forming cytoskeletal GTPase. May play a role in cytokinesis (Potential). May play a role in platelet secretion. This Rattus norvegicus (Rat) protein is Septin-5.